A 407-amino-acid polypeptide reads, in one-letter code: Cysteine desulfurase (407 aa).

Lys-226 carries the N6-(pyridoxal phosphate)lysine modification. The Cysteine persulfide intermediate role is filled by Cys-364.

This sequence belongs to the class-V pyridoxal-phosphate-dependent aminotransferase family. Csd subfamily. In terms of assembly, homodimer. Interacts with SufE and the SufBCD complex composed of SufB, SufC and SufD. The interaction with SufE is required to mediate the direct transfer of the sulfur atom from the S-sulfanylcysteine. It depends on pyridoxal 5'-phosphate as a cofactor.

The protein localises to the cytoplasm. The enzyme catalyses (sulfur carrier)-H + L-cysteine = (sulfur carrier)-SH + L-alanine. It catalyses the reaction L-selenocysteine + AH2 = hydrogenselenide + L-alanine + A + H(+). Its pathway is cofactor biosynthesis; iron-sulfur cluster biosynthesis. Its function is as follows. Cysteine desulfurases mobilize the sulfur from L-cysteine to yield L-alanine, an essential step in sulfur metabolism for biosynthesis of a variety of sulfur-containing biomolecules. Component of the suf operon, which is activated and required under specific conditions such as oxidative stress and iron limitation. Acts as a potent selenocysteine lyase in vitro, that mobilizes selenium from L-selenocysteine. Selenocysteine lyase activity is however unsure in vivo. This chain is Cysteine desulfurase, found in Pectobacterium atrosepticum (strain SCRI 1043 / ATCC BAA-672) (Erwinia carotovora subsp. atroseptica).